The primary structure comprises 352 residues: C-C chemokine receptor type 5 (352 aa).

Residues 1–30 are Extracellular-facing; it reads MDYSMSTALYDIDYGMSEPCQKIDVKQVAA. Tyrosine 3 is modified (sulfotyrosine). An O-linked (GalNAc...) serine glycan is attached at serine 6. Sulfotyrosine is present on residues tyrosine 10 and tyrosine 14. Residue serine 17 is glycosylated (O-linked (GalNAc...) serine). Cystine bridges form between cysteine 20/cysteine 269 and cysteine 101/cysteine 178. A helical membrane pass occupies residues 31 to 58; the sequence is RLLPPLYSLVFIFGFVGNLLVVLILITC. The Cytoplasmic segment spans residues 59-68; it reads KKLKSMTDIY. A helical membrane pass occupies residues 69–89; that stretch reads LLNLAISDLLFLLTLPLWAHY. At 90 to 102 the chain is on the extracellular side; the sequence is AAAEWDFGGAMCK. A helical transmembrane segment spans residues 103–124; that stretch reads VFTGMYHMGYFGGIFFIILLTI. Topologically, residues 125–141 are cytoplasmic; sequence DRYLAIVHAVFALKART. A helical membrane pass occupies residues 142–166; that stretch reads VTFGVVTSGVTWVAAILVSLPDIIF. The Extracellular segment spans residues 167-198; sequence TRSQKEGFRCSCSPHFPASQYQFWKNFHTIMR. A helical membrane pass occupies residues 199–218; the sequence is NILSLVLPLLVMIVCYSGIL. Residues 219-235 are Cytoplasmic-facing; that stretch reads KTLLRCRNEKRRHRAVR. A helical transmembrane segment spans residues 236 to 260; that stretch reads LIFAIMVVYFLFWAPYNVVLLLNTF. Residues 261-277 lie on the Extracellular side of the membrane; the sequence is QEFFGLNNCSSSNRLDR. The chain crosses the membrane as a helical span at residues 278–301; it reads AMQVTETLGMTHCCINPVVYAFVG. At 302–352 the chain is on the cytoplasmic side; the sequence is EKFRSYLSAFFRKHVAKRLCKHCPLLPRETPEPASSVYTRSTGEQEISVGL. S-palmitoyl cysteine attachment occurs at residues cysteine 321 and cysteine 324. The tract at residues 332–352 is disordered; the sequence is PEPASSVYTRSTGEQEISVGL. Serine 336, serine 337, serine 342, and serine 349 each carry phosphoserine; by BARK1. A compositionally biased stretch (polar residues) spans 337 to 346; that stretch reads SVYTRSTGEQ.

It belongs to the G-protein coupled receptor 1 family. In terms of assembly, interacts with PRAF2. Efficient ligand binding to CCL3/MIP-1alpha and CCL4/MIP-1beta requires sulfation, O-glycosylation and sialic acid modifications. Glycosylation on Ser-6 is required for efficient binding of CCL4. Interacts with GRK2. Interacts with ARRB1 and ARRB2. Interacts with CNIH4. Interacts with S100A4; this interaction stimulates T-lymphocyte chemotaxis. Post-translationally, sulfated on at least 2 of the N-terminal tyrosines. Sulfation is required for efficient binding of the chemokines, CCL3 and CCL4. O-glycosylated, but not N-glycosylated. Ser-6 appears to be the major site. Also sialylated glycans present which contribute to chemokine binding. Ser-17 may also be glycosylated and, if so, with small moieties such as a T-antigen. In terms of processing, palmitoylation in the C-terminal is important for cell surface expression. Post-translationally, phosphorylation on serine residues in the C-terminal is stimulated by binding CC chemokines especially by APO-RANTES.

Its subcellular location is the cell membrane. Receptor for a number of inflammatory CC-chemokines including CCL3/MIP-1-alpha, CCL4/MIP-1-beta and RANTES and subsequently transduces a signal by increasing the intracellular calcium ion level. May play a role in the control of granulocytic lineage proliferation or differentiation. Participates in T-lymphocyte migration to the infection site by acting as a chemotactic receptor. In Oryctolagus cuniculus (Rabbit), this protein is C-C chemokine receptor type 5 (CCR5).